The following is a 160-amino-acid chain: Cytochrome b6-f complex subunit 4 (160 aa).

The next 3 membrane-spanning stretches (helical) occupy residues 36–56 (LLYI…GLAV), 95–115 (LLGV…PFLE), and 131–151 (TVFL…TLPI).

Belongs to the cytochrome b family. PetD subfamily. In terms of assembly, the 4 large subunits of the cytochrome b6-f complex are cytochrome b6, subunit IV (17 kDa polypeptide, petD), cytochrome f and the Rieske protein, while the 4 small subunits are petG, petL, petM and petN. The complex functions as a dimer.

It localises to the plastid. It is found in the chloroplast thylakoid membrane. Functionally, component of the cytochrome b6-f complex, which mediates electron transfer between photosystem II (PSII) and photosystem I (PSI), cyclic electron flow around PSI, and state transitions. In Sorghum bicolor (Sorghum), this protein is Cytochrome b6-f complex subunit 4.